The sequence spans 127 residues: uncharacterized protein (127 aa).

This is an uncharacterized protein from Acidianus two-tailed virus (ATV).